The following is a 150-amino-acid chain: Large ribosomal subunit protein bL9 (150 aa).

The protein belongs to the bacterial ribosomal protein bL9 family.

In terms of biological role, binds to the 23S rRNA. The sequence is that of Large ribosomal subunit protein bL9 from Pseudoalteromonas translucida (strain TAC 125).